Consider the following 286-residue polypeptide: uncharacterized protein (286 aa).

NAD(+) is bound by residues 4–18 (AVIG…IARN) and T95. Residue K171 is part of the active site. K239 serves as a coordination point for NAD(+).

The protein belongs to the HIBADH-related family.

This is an uncharacterized protein from Bacillus subtilis (strain 168).